The chain runs to 143 residues: Ribosome-binding factor A (143 aa).

Over residues Ala-119–Asp-129 the composition is skewed to basic and acidic residues. The segment at Ala-119 to Ala-143 is disordered.

It belongs to the RbfA family. In terms of assembly, monomer. Binds 30S ribosomal subunits, but not 50S ribosomal subunits or 70S ribosomes.

It is found in the cytoplasm. One of several proteins that assist in the late maturation steps of the functional core of the 30S ribosomal subunit. Associates with free 30S ribosomal subunits (but not with 30S subunits that are part of 70S ribosomes or polysomes). Required for efficient processing of 16S rRNA. May interact with the 5'-terminal helix region of 16S rRNA. The chain is Ribosome-binding factor A from Marinobacter nauticus (strain ATCC 700491 / DSM 11845 / VT8) (Marinobacter aquaeolei).